We begin with the raw amino-acid sequence, 173 residues long: Mitochondrial import inner membrane translocase subunit TIM22-1 (173 aa).

A mitochondrion-targeting transit peptide spans 1-18 (MADSSAAEPTTGASSPPV). Residues 1 to 26 (MADSSAAEPTTGASSPPVASDENSTQ) form a disordered region. Helical transmembrane passes span 52 to 72 (VTSGVMGGGLGLMMGLFLGAL), 101 to 119 (SCKTFAVMGLVFSAAECIV), 128 to 144 (TVNTAIAGCVTGGSMSA), and 151 to 168 (ACIGCAGFATFSVLIEKF).

The protein belongs to the Tim17/Tim22/Tim23 family. In terms of tissue distribution, expressed in young cotyledons, roots, flowers and leaves.

The protein localises to the mitochondrion inner membrane. In terms of biological role, essential core component of the TIM22 complex, a complex that mediates the import and insertion of multi-pass transmembrane proteins into the mitochondrial inner membrane. The chain is Mitochondrial import inner membrane translocase subunit TIM22-1 (TIM22-1) from Arabidopsis thaliana (Mouse-ear cress).